Here is a 370-residue protein sequence, read N- to C-terminus: Chorismate synthase (370 aa).

Arg47 serves as a coordination point for NADP(+). Residues 124–126, Gly286, 301–305, and Arg327 each bind FMN; these read RSS and KPTAT.

This sequence belongs to the chorismate synthase family. As to quaternary structure, homotetramer. Requires FMNH2 as cofactor.

The enzyme catalyses 5-O-(1-carboxyvinyl)-3-phosphoshikimate = chorismate + phosphate. It functions in the pathway metabolic intermediate biosynthesis; chorismate biosynthesis; chorismate from D-erythrose 4-phosphate and phosphoenolpyruvate: step 7/7. Its function is as follows. Catalyzes the anti-1,4-elimination of the C-3 phosphate and the C-6 proR hydrogen from 5-enolpyruvylshikimate-3-phosphate (EPSP) to yield chorismate, which is the branch point compound that serves as the starting substrate for the three terminal pathways of aromatic amino acid biosynthesis. This reaction introduces a second double bond into the aromatic ring system. In Trichodesmium erythraeum (strain IMS101), this protein is Chorismate synthase.